Reading from the N-terminus, the 370-residue chain is Phospho-2-dehydro-3-deoxyheptonate aldolase, tyrosine-inhibited (370 aa).

Ser-2 is modified (N-acetylserine).

This sequence belongs to the class-I DAHP synthase family.

It carries out the reaction D-erythrose 4-phosphate + phosphoenolpyruvate + H2O = 7-phospho-2-dehydro-3-deoxy-D-arabino-heptonate + phosphate. Its pathway is metabolic intermediate biosynthesis; chorismate biosynthesis; chorismate from D-erythrose 4-phosphate and phosphoenolpyruvate: step 1/7. Inhibited by tyrosine. Stereospecific condensation of phosphoenolpyruvate (PEP) and D-erythrose-4-phosphate (E4P) giving rise to 3-deoxy-D-arabino-heptulosonate-7-phosphate (DAHP). The chain is Phospho-2-dehydro-3-deoxyheptonate aldolase, tyrosine-inhibited (ARO4) from Saccharomyces cerevisiae (strain ATCC 204508 / S288c) (Baker's yeast).